A 230-amino-acid chain; its full sequence is Ribonuclease 3 (230 aa).

In terms of domain architecture, RNase III spans 19–134 (ELLTIALTHR…LLGAIYLEHG (116 aa)). E44 contributes to the Mg(2+) binding site. D48 is a catalytic residue. The Mg(2+) site is built by D120 and E123. A DRBM domain is found at 161–229 (DWKSSLQELT…AASAYKTLDE (69 aa)).

Belongs to the ribonuclease III family. In terms of assembly, homodimer. Mg(2+) is required as a cofactor.

Its subcellular location is the cytoplasm. It catalyses the reaction Endonucleolytic cleavage to 5'-phosphomonoester.. Functionally, digests double-stranded RNA. Involved in the processing of primary rRNA transcript to yield the immediate precursors to the all rRNAs (23S, 16S and 5S). Processes some mRNAs, and tRNAs when they are encoded in the rRNA operon. Processes pre-crRNA and tracrRNA of type II CRISPR loci if present in the organism. The sequence is that of Ribonuclease 3 (rnc) from Mycolicibacterium smegmatis (strain ATCC 700084 / mc(2)155) (Mycobacterium smegmatis).